The primary structure comprises 45 residues: FKBP-type peptidyl-prolyl cis-trans isomerase, chloroplastic (45 aa).

The protein belongs to the FKBP-type PPIase family. In terms of tissue distribution, expressed in leaves, but not in roots.

It is found in the plastid. The protein localises to the chloroplast thylakoid lumen. It carries out the reaction [protein]-peptidylproline (omega=180) = [protein]-peptidylproline (omega=0). Its function is as follows. PPIases accelerate the folding of proteins. It catalyzes the cis-trans isomerization of proline imidic peptide bonds in oligopeptides. This chain is FKBP-type peptidyl-prolyl cis-trans isomerase, chloroplastic, found in Vicia faba (Broad bean).